A 324-amino-acid chain; its full sequence is R2-like ligand binding oxidase (324 aa).

3 residues coordinate Mn(2+): glutamate 79, glutamate 112, and histidine 115. The 3-(O4'-tyrosyl)-valine (Val-Tyr) cross-link spans 82-173 (VTEDIQPFMK…VNQVRASVTY (92 aa)). Position 112 (glutamate 112) interacts with Fe cation. Glutamate 178, glutamate 213, and histidine 216 together coordinate Fe cation. Residues 304 to 324 (PEALEEKFGEEDAKAMSEAAG) are disordered. The span at 307-318 (LEEKFGEEDAKA) shows a compositional bias: basic and acidic residues.

This sequence belongs to the ribonucleoside diphosphate reductase small chain family. R2-like ligand binding oxidase subfamily. Homodimer. Fe cation is required as a cofactor. The cofactor is Mn(2+).

Its function is as follows. Probable oxidase. This is R2-like ligand binding oxidase from Rhodococcus jostii (strain RHA1).